The chain runs to 200 residues: Probable nicotinate-nucleotide adenylyltransferase (200 aa).

It belongs to the NadD family.

The catalysed reaction is nicotinate beta-D-ribonucleotide + ATP + H(+) = deamido-NAD(+) + diphosphate. It functions in the pathway cofactor biosynthesis; NAD(+) biosynthesis; deamido-NAD(+) from nicotinate D-ribonucleotide: step 1/1. In terms of biological role, catalyzes the reversible adenylation of nicotinate mononucleotide (NaMN) to nicotinic acid adenine dinucleotide (NaAD). This is Probable nicotinate-nucleotide adenylyltransferase from Clostridium botulinum (strain Alaska E43 / Type E3).